A 1321-amino-acid chain; its full sequence is Indole-3-acetaldehyde oxidase (1321 aa).

The 2Fe-2S ferredoxin-type domain maps to M1–L90. Residues C42, C47, and C50 each contribute to the [2Fe-2S] cluster site. Residues V215–S404 enclose the FAD-binding PCMH-type domain.

The protein belongs to the xanthine dehydrogenase family. In terms of assembly, aldehyde oxidases (AO) are homodimers and heterodimers of AO subunits. AO-beta is a AAO1-AAO2 heterodimer; AO-gamma is a AAO2 homodimer. AAO2 also forms a dimer with AAO3. It depends on [2Fe-2S] cluster as a cofactor. The cofactor is FAD. Requires Mo-molybdopterin as cofactor. As to expression, weakly expressed in roots, leaves and seedlings. In seedlings, mostly expressed in lower part of hypocotyls. Detectable in seeds and mature siliques at low levels.

It is found in the cytoplasm. It catalyses the reaction indole-3-acetaldehyde + O2 + H2O = (indol-3-yl)acetate + H2O2 + H(+). Strongly inhibited by iodoacetate, potassium cyanide (KCN), 2-mercaptoethanol, dithiothreitol (DTT), p-chloromercuribenzoate, menadione and estradiol. Weakly inhibited by 4'-(9-acridinylamino)methanesulfon-m-anisidine (mAMSA) and tritonX-100. Not affected by allopurinol. In terms of biological role, in higher plant aldehyde oxidases (AO) appear to be homo- and heterodimeric assemblies of AO subunits with probably different physiological functions. In vitro, AO-gamma uses heptaldehyde, benzaldehyde, naphthaldehyde and cinnamaldehyde as substrates; AO-beta uses indole-3-acetaldehyde (IAAld), indole-3-aldehyde (IAld) and naphtaldehyde; the AAO2-AAO3 dimer uses abscisic aldehyde. This Arabidopsis thaliana (Mouse-ear cress) protein is Indole-3-acetaldehyde oxidase (AAO2).